The sequence spans 257 residues: Zinc transporter ZupT (257 aa).

Helical transmembrane passes span 5-25 (LILTILAGAATFIGAFLGVLG), 32-52 (LLAFSLGFAAGIMLLISLMEM), 61-81 (GMSPVLGYGMFIFGLLGYFGL), 109-129 (AILLTLGISLHNFPEGIATFV), 137-157 (LGFGIALAVALHNIPEGLAVA), 171-191 (ILWAGISGLAEILGGVLAWLI), 195-215 (MISPVVMAAIMAAVAGIMVAL), and 236-256 (GVLCGMSVMGFSLVLLQTAGI). Fe(2+) is bound by residues Asn-120 and Glu-123. Glu-123 and His-148 together coordinate Zn(2+). Positions 149, 152, and 181 each coordinate Fe(2+). A Zn(2+)-binding site is contributed by Glu-152.

It belongs to the ZIP transporter (TC 2.A.5) family. ZupT subfamily.

It localises to the cell inner membrane. The catalysed reaction is Zn(2+)(in) = Zn(2+)(out). Functionally, mediates zinc uptake. May also transport other divalent cations. This is Zinc transporter ZupT from Shigella flexneri serotype 5b (strain 8401).